A 111-amino-acid chain; its full sequence is Photosystem II reaction center Psb28 protein (111 aa).

The protein belongs to the Psb28 family. In terms of assembly, part of the photosystem II complex.

The protein localises to the cellular thylakoid membrane. The sequence is that of Photosystem II reaction center Psb28 protein from Nostoc sp. (strain PCC 7120 / SAG 25.82 / UTEX 2576).